A 339-amino-acid chain; its full sequence is Cilia- and flagella-associated protein 36 (339 aa).

2 coiled-coil regions span residues 142–188 (ISDL…ENKQ) and 255–330 (NLSQ…EVIL). Disordered regions lie at residues 177-212 (NLTLGEHSENKQSSGSERTPNNTELPVKTQKEEKQP) and 281-318 (KKQESKKMAQNSEEHEEKATCSKQEMTEEEKKSLQRRK). The span at 187-200 (KQSSGSERTPNNTE) shows a compositional bias: polar residues. A compositionally biased stretch (basic and acidic residues) spans 281–313 (KKQESKKMAQNSEEHEEKATCSKQEMTEEEKKS).

Belongs to the CFAP36 family.

The protein resides in the nucleus. Its subcellular location is the cytoplasm. It is found in the cell projection. The protein localises to the cilium. It localises to the flagellum. This Xenopus tropicalis (Western clawed frog) protein is Cilia- and flagella-associated protein 36.